The following is a 463-amino-acid chain: Elongation factor 1-alpha (463 aa).

The tr-type G domain occupies Lys-5 to Thr-242. The interval Gly-14–Ser-21 is G1. Gly-14–Ser-21 provides a ligand contact to GTP. The interval Gly-70–Asp-74 is G2. A G3 region spans residues Asp-91 to Gly-94. GTP is bound by residues Asp-91–His-95 and Asn-153–Asp-156. The G4 stretch occupies residues Asn-153–Asp-156. Residues Ser-194 to Phe-196 form a G5 region. Residues Glu-301 and Glu-374 each carry the 5-glutamyl glycerylphosphorylethanolamine modification. Residues Lys-443–Lys-463 form a disordered region. Positions Gly-446–Ala-455 are enriched in polar residues.

This sequence belongs to the TRAFAC class translation factor GTPase superfamily. Classic translation factor GTPase family. EF-Tu/EF-1A subfamily.

Its subcellular location is the cytoplasm. Its function is as follows. This protein promotes the GTP-dependent binding of aminoacyl-tRNA to the A-site of ribosomes during protein biosynthesis. This is Elongation factor 1-alpha from Caenorhabditis elegans.